A 453-amino-acid chain; its full sequence is Tryptophan biosynthesis protein TrpCF (453 aa).

The segment at 1–257 (MMQTVLAKIV…AAVRRVLLGE (257 aa)) is indole-3-glycerol phosphate synthase. Residues 258–453 (NKVCGLTRGQ…ASVFQTLRAY (196 aa)) form an N-(5'-phosphoribosyl)anthranilate isomerase region.

This sequence in the N-terminal section; belongs to the TrpC family. In the C-terminal section; belongs to the TrpF family. Monomer.

It catalyses the reaction N-(5-phospho-beta-D-ribosyl)anthranilate = 1-(2-carboxyphenylamino)-1-deoxy-D-ribulose 5-phosphate. The enzyme catalyses 1-(2-carboxyphenylamino)-1-deoxy-D-ribulose 5-phosphate + H(+) = (1S,2R)-1-C-(indol-3-yl)glycerol 3-phosphate + CO2 + H2O. It participates in amino-acid biosynthesis; L-tryptophan biosynthesis; L-tryptophan from chorismate: step 3/5. Its pathway is amino-acid biosynthesis; L-tryptophan biosynthesis; L-tryptophan from chorismate: step 4/5. In terms of biological role, bifunctional enzyme that catalyzes two sequential steps of tryptophan biosynthetic pathway. The first reaction is catalyzed by the isomerase, coded by the TrpF domain; the second reaction is catalyzed by the synthase, coded by the TrpC domain. This Escherichia coli O157:H7 protein is Tryptophan biosynthesis protein TrpCF (trpC).